We begin with the raw amino-acid sequence, 687 residues long: Ribosomal RNA processing protein 1 homolog (687 aa).

Residues 288–298 (DEEDDEVNAEE) are compositionally biased toward acidic residues. Disordered stretches follow at residues 288 to 312 (DEED…RAGN) and 463 to 624 (VKEA…GSGK). Basic and acidic residues-rich tracts occupy residues 463 to 488 (VKEA…DQTK), 497 to 520 (PKND…EEPA), and 527 to 543 (HSKT…DEQP). The segment covering 554 to 564 (KAKPTPKTKAA) has biased composition (low complexity). The segment covering 596 to 608 (KQANSKLPQSTPK) has biased composition (polar residues). T617 and T620 each carry phosphothreonine. The residue at position 622 (S622) is a Phosphoserine.

Belongs to the RRP1 family.

The protein resides in the nucleus. May be involved in the generation of 28S rRNA. The chain is Ribosomal RNA processing protein 1 homolog (Nnp-1) from Drosophila melanogaster (Fruit fly).